Reading from the N-terminus, the 82-residue chain is Large ribosomal subunit protein uL23 (82 aa).

It belongs to the universal ribosomal protein uL23 family. In terms of assembly, part of the 50S ribosomal subunit. Contacts protein L29.

Binds to 23S rRNA. One of the proteins that surrounds the polypeptide exit tunnel on the outside of the ribosome. This is Large ribosomal subunit protein uL23 from Sulfolobus acidocaldarius (strain ATCC 33909 / DSM 639 / JCM 8929 / NBRC 15157 / NCIMB 11770).